The sequence spans 139 residues: NADH-quinone oxidoreductase subunit A (139 aa).

The next 3 helical transmembrane spans lie at 16–36 (GLFI…ASLL), 69–89 (LVAM…AWAV), and 94–114 (VGWE…AGLV).

This sequence belongs to the complex I subunit 3 family. In terms of assembly, NDH-1 is composed of 14 different subunits. Subunits NuoA, H, J, K, L, M, N constitute the membrane sector of the complex.

The protein localises to the cell inner membrane. The catalysed reaction is a quinone + NADH + 5 H(+)(in) = a quinol + NAD(+) + 4 H(+)(out). NDH-1 shuttles electrons from NADH, via FMN and iron-sulfur (Fe-S) centers, to quinones in the respiratory chain. The immediate electron acceptor for the enzyme in this species is believed to be ubiquinone. Couples the redox reaction to proton translocation (for every two electrons transferred, four hydrogen ions are translocated across the cytoplasmic membrane), and thus conserves the redox energy in a proton gradient. The polypeptide is NADH-quinone oxidoreductase subunit A (Chromohalobacter salexigens (strain ATCC BAA-138 / DSM 3043 / CIP 106854 / NCIMB 13768 / 1H11)).